We begin with the raw amino-acid sequence, 64 residues long: Large ribosomal subunit protein bL35 (64 aa).

Over residues 1–14 the composition is skewed to basic residues; it reads MKQKTHKGTAKRVK. Positions 1-50 are disordered; sequence MKQKTHKGTAKRVKITGSGKLRREQANRRHLLEGKPSKRTRRLKGTEDVA. The span at 21–36 shows a compositional bias: basic and acidic residues; the sequence is LRREQANRRHLLEGKP.

The protein belongs to the bacterial ribosomal protein bL35 family.

The protein is Large ribosomal subunit protein bL35 of Corynebacterium diphtheriae (strain ATCC 700971 / NCTC 13129 / Biotype gravis).